Consider the following 405-residue polypeptide: 3-isopropylmalate dehydrogenase (405 aa).

Residue 86 to 104 (GAANTVWTTPDGRTDVRPE) participates in NAD(+) binding. The substrate site is built by Arg111, Arg121, Arg148, and Asp237. Residues Asp237, Asp262, and Asp266 each coordinate Mg(2+). 301-312 (GSAPDLGKQKVN) lines the NAD(+) pocket. The interval 352 to 371 (ADIGGSSSTSEVGDLLPTRS) is disordered.

It belongs to the isocitrate and isopropylmalate dehydrogenases family. As to quaternary structure, homodimer. Requires Mg(2+) as cofactor. The cofactor is Mn(2+).

The protein resides in the cytoplasm. It carries out the reaction (2R,3S)-3-isopropylmalate + NAD(+) = 4-methyl-2-oxopentanoate + CO2 + NADH. It functions in the pathway amino-acid biosynthesis; L-leucine biosynthesis; L-leucine from 3-methyl-2-oxobutanoate: step 3/4. Functionally, catalyzes the oxidation of 3-carboxy-2-hydroxy-4-methylpentanoate (3-isopropylmalate) to 3-carboxy-4-methyl-2-oxopentanoate. The product decarboxylates to 4-methyl-2 oxopentanoate. The sequence is that of 3-isopropylmalate dehydrogenase (LEU2) from Yarrowia lipolytica (strain CLIB 122 / E 150) (Yeast).